Here is a 108-residue protein sequence, read N- to C-terminus: Competence protein ComGC (108 aa).

Positions 1 to 13 (MKKMMTFLKKAKV) are cleaved as a signal peptide. Residues 14–39 (KAFTLVEMLVVLLIISVLFLLFVPNL) form a may be involved in polymerization of ComGC region. The residue at position 16 (Phe16) is an N-methylphenylalanine. Residues 16–36 (FTLVEMLVVLLIISVLFLLFV) form a helical membrane-spanning segment.

Belongs to the ComGC family. The transformation pili are flexible filaments, consisting mainly of the major pilin ComGC and smaller amounts of the minor pilins, including at least ComGD, ComGF and ComGG, and perhaps ComGE. Homodimer. Forms higher-order multimers. Interacts with ComGG; the interaction is probably direct. Undergoes proteolytic cleavage.

It localises to the cell membrane. It is found in the cell surface. The protein resides in the fimbrium. The protein localises to the secreted. Major component of the type IV-like pilus (T4P) that plays a role in transformation. Transformation pili are dynamically extended and retracted, perhaps thereby promoting DNA uptake and transformation. Required for transformation. Required for DNA binding. The protein is Competence protein ComGC of Streptococcus pneumoniae (strain ATCC BAA-255 / R6).